Reading from the N-terminus, the 174-residue chain is Large ribosomal subunit protein uL10 (174 aa).

It belongs to the universal ribosomal protein uL10 family. As to quaternary structure, part of the ribosomal stalk of the 50S ribosomal subunit. The N-terminus interacts with L11 and the large rRNA to form the base of the stalk. The C-terminus forms an elongated spine to which L12 dimers bind in a sequential fashion forming a multimeric L10(L12)X complex.

In terms of biological role, forms part of the ribosomal stalk, playing a central role in the interaction of the ribosome with GTP-bound translation factors. The polypeptide is Large ribosomal subunit protein uL10 (Syntrophus aciditrophicus (strain SB)).